Here is a 355-residue protein sequence, read N- to C-terminus: Uroporphyrinogen decarboxylase (355 aa).

Residues 27–31 (RQAGR), D77, Y154, T209, and H328 contribute to the substrate site.

The protein belongs to the uroporphyrinogen decarboxylase family. As to quaternary structure, homodimer.

Its subcellular location is the cytoplasm. It catalyses the reaction uroporphyrinogen III + 4 H(+) = coproporphyrinogen III + 4 CO2. The protein operates within porphyrin-containing compound metabolism; protoporphyrin-IX biosynthesis; coproporphyrinogen-III from 5-aminolevulinate: step 4/4. In terms of biological role, catalyzes the decarboxylation of four acetate groups of uroporphyrinogen-III to yield coproporphyrinogen-III. The sequence is that of Uroporphyrinogen decarboxylase from Colwellia psychrerythraea (strain 34H / ATCC BAA-681) (Vibrio psychroerythus).